Reading from the N-terminus, the 344-residue chain is Ubiquitin-associated domain-containing protein 2 (344 aa).

The N-terminal stretch at 1–35 (MFTSTGSSGLYKAPLSKSLLLVPSALSLLLALLLP) is a signal peptide. Residues 36–91 (HCQKLFVYDLHAVKNDFQIWRLICGRIICLDLKDTFCSSLLIYNFRIFERRYGSRK) lie on the Extracellular side of the membrane. Residues 92–112 (FASFLLGSWVLSALFDFLLIE) traverse the membrane as a helical segment. The Cytoplasmic portion of the chain corresponds to 113-125 (AMQYFFGITAASN). The chain crosses the membrane as a helical span at residues 126–146 (LPSGFLAPVFALFVPFYCSIP). The Extracellular segment spans residues 147 to 163 (RVQVAQILGPLSITNKT). N-linked (GlcNAc...) asparagine glycosylation occurs at asparagine 161. Residues 164–184 (LIYILGLQLFTSGSYIWIVAI) traverse the membrane as a helical segment. Topologically, residues 185–344 (SGLMSGLCYD…NVATNFLLQH (160 aa)) are cytoplasmic. The region spanning 304–344 (EVSEEQVARLMEMGFSRGDALEALRASNNDLNVATNFLLQH) is the UBA domain.

As to quaternary structure, interacts with FAF2. Interacts with LMBR1L. Interacts with AMFR and VCP.

The protein localises to the endoplasmic reticulum membrane. Restricts trafficking of FAF2 from the endoplasmic reticulum to lipid droplets. In association with LMBR1L and E3 ubiquitin-protein ligase AMFR, negatively regulates the canonical Wnt signaling pathway in the lymphocytes by promoting the ubiquitin-mediated degradation of CTNNB1 and Wnt receptors FZD6 and LRP6. In Homo sapiens (Human), this protein is Ubiquitin-associated domain-containing protein 2 (UBAC2).